The following is a 652-amino-acid chain: tRNA 5-methylaminomethyl-2-thiouridine biosynthesis bifunctional protein MnmC (652 aa).

A tRNA (mnm(5)s(2)U34)-methyltransferase region spans residues 1–235 (MPDRLVPATL…EPALRVGEYA (235 aa)). Residues 259–652 (IGAGLAGCAV…IRALRGRQIG (394 aa)) are FAD-dependent cmnm(5)s(2)U34 oxidoreductase.

It in the N-terminal section; belongs to the methyltransferase superfamily. tRNA (mnm(5)s(2)U34)-methyltransferase family. The protein in the C-terminal section; belongs to the DAO family. FAD serves as cofactor.

It is found in the cytoplasm. It catalyses the reaction 5-aminomethyl-2-thiouridine(34) in tRNA + S-adenosyl-L-methionine = 5-methylaminomethyl-2-thiouridine(34) in tRNA + S-adenosyl-L-homocysteine + H(+). Catalyzes the last two steps in the biosynthesis of 5-methylaminomethyl-2-thiouridine (mnm(5)s(2)U) at the wobble position (U34) in tRNA. Catalyzes the FAD-dependent demodification of cmnm(5)s(2)U34 to nm(5)s(2)U34, followed by the transfer of a methyl group from S-adenosyl-L-methionine to nm(5)s(2)U34, to form mnm(5)s(2)U34. The protein is tRNA 5-methylaminomethyl-2-thiouridine biosynthesis bifunctional protein MnmC of Burkholderia ambifaria (strain MC40-6).